We begin with the raw amino-acid sequence, 362 residues long: Dihydroorotate dehydrogenase (quinone) (362 aa).

FMN is bound by residues 62 to 66 (AGYDK) and Thr86. Lys66 contributes to the substrate binding site. 111–115 (NRLGF) serves as a coordination point for substrate. FMN contacts are provided by Asn139 and Asn170. Asn170 contributes to the substrate binding site. Catalysis depends on Ser173, which acts as the Nucleophile. Residue Asn175 coordinates substrate. The FMN site is built by Lys215 and Ser243. A substrate-binding site is contributed by 244-245 (NT). FMN contacts are provided by residues Gly266, Gly295, and 316–317 (YS).

It belongs to the dihydroorotate dehydrogenase family. Type 2 subfamily. As to quaternary structure, monomer. FMN serves as cofactor.

Its subcellular location is the cell membrane. It carries out the reaction (S)-dihydroorotate + a quinone = orotate + a quinol. It functions in the pathway pyrimidine metabolism; UMP biosynthesis via de novo pathway; orotate from (S)-dihydroorotate (quinone route): step 1/1. Its function is as follows. Catalyzes the conversion of dihydroorotate to orotate with quinone as electron acceptor. In Sinorhizobium medicae (strain WSM419) (Ensifer medicae), this protein is Dihydroorotate dehydrogenase (quinone).